Consider the following 274-residue polypeptide: tRNA-cytidine(32) 2-sulfurtransferase (274 aa).

Positions 40–45 (SGGKDS) match the PP-loop motif motif. Positions 115, 118, and 206 each coordinate [4Fe-4S] cluster.

The protein belongs to the TtcA family. In terms of assembly, homodimer. It depends on Mg(2+) as a cofactor. [4Fe-4S] cluster is required as a cofactor.

It is found in the cytoplasm. The catalysed reaction is cytidine(32) in tRNA + S-sulfanyl-L-cysteinyl-[cysteine desulfurase] + AH2 + ATP = 2-thiocytidine(32) in tRNA + L-cysteinyl-[cysteine desulfurase] + A + AMP + diphosphate + H(+). It functions in the pathway tRNA modification. Catalyzes the ATP-dependent 2-thiolation of cytidine in position 32 of tRNA, to form 2-thiocytidine (s(2)C32). The sulfur atoms are provided by the cysteine/cysteine desulfurase (IscS) system. In Pseudomonas putida (strain ATCC 47054 / DSM 6125 / CFBP 8728 / NCIMB 11950 / KT2440), this protein is tRNA-cytidine(32) 2-sulfurtransferase.